The chain runs to 379 residues: Eukaryotic translation initiation factor 3 subunit H (379 aa).

The 154-residue stretch at 17 to 170 (VQIDSLVVMK…IRAYRLSTKA (154 aa)) folds into the MPN domain. Positions 280-291 (RQAENEQREARG) are enriched in basic and acidic residues. The tract at residues 280-300 (RQAENEQREARGEPPLSFDDI) is disordered.

Belongs to the eIF-3 subunit H family. In terms of assembly, component of the eukaryotic translation initiation factor 3 (eIF-3) complex.

Its subcellular location is the cytoplasm. Its function is as follows. Component of the eukaryotic translation initiation factor 3 (eIF-3) complex, which is involved in protein synthesis of a specialized repertoire of mRNAs and, together with other initiation factors, stimulates binding of mRNA and methionyl-tRNAi to the 40S ribosome. The eIF-3 complex specifically targets and initiates translation of a subset of mRNAs involved in cell proliferation. This is Eukaryotic translation initiation factor 3 subunit H from Brugia malayi (Filarial nematode worm).